The primary structure comprises 82 residues: U-actitoxin-Avd3q (82 aa).

The first 16 residues, 1 to 16 (MVFLLCFFLVADVSYG), serve as a signal peptide directing secretion. The 51-residue stretch at 21-71 (CELPKVVGFCRARLPRYYYNSSSRRCEKFNYGGCGGNANNFHTLEECEKVC) folds into the BPTI/Kunitz inhibitor domain. 3 disulfide bridges follow: Cys21-Cys71, Cys30-Cys54, and Cys46-Cys67. Positions 76 to 82 (RDSPKEN) are excised as a propeptide.

It belongs to the venom Kunitz-type family. Sea anemone type 2 potassium channel toxin subfamily.

It is found in the secreted. It localises to the nematocyst. Functionally, serine protease inhibitor that inhibits both tissue and plasma kallikreins. Has hemolytic activity. Inhibits voltage-gated potassium channels (Kv). This chain is U-actitoxin-Avd3q, found in Anemonia viridis (Snakelocks anemone).